Here is a 117-residue protein sequence, read N- to C-terminus: Protein RALF-like 27 (117 aa).

An N-terminal signal peptide occupies residues Met-1–Ala-27. Positions Ser-28 to Leu-71 are cleaved as a propeptide — removed in mature form. Asn-31 is a glycosylation site (N-linked (GlcNAc...) asparagine). 2 cysteine pairs are disulfide-bonded: Cys-88–Cys-96 and Cys-107–Cys-113.

This sequence belongs to the plant rapid alkalinization factor (RALF) family.

The protein resides in the secreted. Cell signaling peptide that may regulate plant stress, growth, and development. Mediates a rapid alkalinization of extracellular space by mediating a transient increase in the cytoplasmic Ca(2+) concentration leading to a calcium-dependent signaling events through a cell surface receptor and a concomitant activation of some intracellular mitogen-activated protein kinases. The sequence is that of Protein RALF-like 27 (RALFL27) from Arabidopsis thaliana (Mouse-ear cress).